The sequence spans 91 residues: Small ribosomal subunit protein uS17 (91 aa).

It belongs to the universal ribosomal protein uS17 family. As to quaternary structure, part of the 30S ribosomal subunit.

Functionally, one of the primary rRNA binding proteins, it binds specifically to the 5'-end of 16S ribosomal RNA. The protein is Small ribosomal subunit protein uS17 of Salinispora arenicola (strain CNS-205).